The primary structure comprises 270 residues: 3-methyl-2-oxobutanoate hydroxymethyltransferase (270 aa).

Positions 41 and 80 each coordinate Mg(2+). 3-methyl-2-oxobutanoate is bound by residues 41–42 (DS), Asp-80, and Lys-109. Residue Glu-111 coordinates Mg(2+). Catalysis depends on Glu-178, which acts as the Proton acceptor.

It belongs to the PanB family. As to quaternary structure, homodecamer; pentamer of dimers. Requires Mg(2+) as cofactor.

The protein resides in the cytoplasm. The catalysed reaction is 3-methyl-2-oxobutanoate + (6R)-5,10-methylene-5,6,7,8-tetrahydrofolate + H2O = 2-dehydropantoate + (6S)-5,6,7,8-tetrahydrofolate. It participates in cofactor biosynthesis; (R)-pantothenate biosynthesis; (R)-pantoate from 3-methyl-2-oxobutanoate: step 1/2. Its function is as follows. Catalyzes the reversible reaction in which hydroxymethyl group from 5,10-methylenetetrahydrofolate is transferred onto alpha-ketoisovalerate to form ketopantoate. The polypeptide is 3-methyl-2-oxobutanoate hydroxymethyltransferase (Thermotoga sp. (strain RQ2)).